We begin with the raw amino-acid sequence, 35 residues long: Photosystem II reaction center protein M (35 aa).

The chain crosses the membrane as a helical span at residues 7 to 27 (GFIASILFVLVPTVFLLILFI).

The protein belongs to the PsbM family. As to quaternary structure, PSII is composed of 1 copy each of membrane proteins PsbA, PsbB, PsbC, PsbD, PsbE, PsbF, PsbH, PsbI, PsbJ, PsbK, PsbL, PsbM, PsbT, PsbX, PsbY, PsbZ, Psb30/Ycf12, peripheral proteins PsbO, CyanoQ (PsbQ), PsbU, PsbV and a large number of cofactors. It forms dimeric complexes.

Its subcellular location is the cellular thylakoid membrane. Functionally, one of the components of the core complex of photosystem II (PSII). PSII is a light-driven water:plastoquinone oxidoreductase that uses light energy to abstract electrons from H(2)O, generating O(2) and a proton gradient subsequently used for ATP formation. It consists of a core antenna complex that captures photons, and an electron transfer chain that converts photonic excitation into a charge separation. This subunit is found at the monomer-monomer interface. This is Photosystem II reaction center protein M from Microcystis aeruginosa (strain NIES-843 / IAM M-2473).